The primary structure comprises 368 residues: Phospho-N-acetylmuramoyl-pentapeptide-transferase (368 aa).

9 helical membrane passes run 30 to 50 (AAAI…IRFL), 72 to 92 (VPTM…LLWA), 98 to 118 (HVWL…IDDY), 139 to 159 (VALG…SVLL), 170 to 190 (FSVD…TAVS), 201 to 221 (GLAA…AYLG), 238 to 258 (AGEI…FLWF), 262 to 284 (PAEV…VIAL), and 345 to 365 (KIVI…LMTL).

This sequence belongs to the glycosyltransferase 4 family. MraY subfamily. It depends on Mg(2+) as a cofactor.

It is found in the cell inner membrane. It catalyses the reaction UDP-N-acetyl-alpha-D-muramoyl-L-alanyl-gamma-D-glutamyl-meso-2,6-diaminopimeloyl-D-alanyl-D-alanine + di-trans,octa-cis-undecaprenyl phosphate = di-trans,octa-cis-undecaprenyl diphospho-N-acetyl-alpha-D-muramoyl-L-alanyl-D-glutamyl-meso-2,6-diaminopimeloyl-D-alanyl-D-alanine + UMP. It participates in cell wall biogenesis; peptidoglycan biosynthesis. Catalyzes the initial step of the lipid cycle reactions in the biosynthesis of the cell wall peptidoglycan: transfers peptidoglycan precursor phospho-MurNAc-pentapeptide from UDP-MurNAc-pentapeptide onto the lipid carrier undecaprenyl phosphate, yielding undecaprenyl-pyrophosphoryl-MurNAc-pentapeptide, known as lipid I. This Chlorobaculum parvum (strain DSM 263 / NCIMB 8327) (Chlorobium vibrioforme subsp. thiosulfatophilum) protein is Phospho-N-acetylmuramoyl-pentapeptide-transferase.